The chain runs to 201 residues: Twin horsetail protein 2 (201 aa).

The protein resides in the nucleus. Functionally, required for correct meiotic chromosome segregation and recombination. The protein is Twin horsetail protein 2 (tht2) of Schizosaccharomyces pombe (strain 972 / ATCC 24843) (Fission yeast).